The sequence spans 506 residues: Proline--tRNA ligase (506 aa).

Belongs to the class-II aminoacyl-tRNA synthetase family. ProS type 3 subfamily. Homodimer.

It is found in the cytoplasm. It catalyses the reaction tRNA(Pro) + L-proline + ATP = L-prolyl-tRNA(Pro) + AMP + diphosphate. In terms of biological role, catalyzes the attachment of proline to tRNA(Pro) in a two-step reaction: proline is first activated by ATP to form Pro-AMP and then transferred to the acceptor end of tRNA(Pro). The chain is Proline--tRNA ligase from Akkermansia muciniphila (strain ATCC BAA-835 / DSM 22959 / JCM 33894 / BCRC 81048 / CCUG 64013 / CIP 107961 / Muc).